A 436-amino-acid chain; its full sequence is GTPase Obg (436 aa).

The Obg domain occupies 2 to 160; it reads SMFLDTAKIK…RELQLELKIL (159 aa). Residues 161–338 enclose the OBG-type G domain; that stretch reads ADVGLVGFPS…LLDATAELLD (178 aa). GTP-binding positions include 167 to 174, 192 to 196, 214 to 217, 284 to 287, and 319 to 321; these read GFPSVGKS, FTTIV, DLPG, NKMD, and SGL. Residues Ser-174 and Thr-194 each contribute to the Mg(2+) site. Residues 358-436 form the OCT domain; the sequence is GFDEEEKAFE…IGKFEFEFVD (79 aa).

It belongs to the TRAFAC class OBG-HflX-like GTPase superfamily. OBG GTPase family. As to quaternary structure, monomer. The cofactor is Mg(2+).

Its subcellular location is the cytoplasm. In terms of biological role, an essential GTPase which binds GTP, GDP and possibly (p)ppGpp with moderate affinity, with high nucleotide exchange rates and a fairly low GTP hydrolysis rate. Plays a role in control of the cell cycle, stress response, ribosome biogenesis and in those bacteria that undergo differentiation, in morphogenesis control. The sequence is that of GTPase Obg from Streptococcus pneumoniae serotype 2 (strain D39 / NCTC 7466).